The following is a 420-amino-acid chain: uncharacterized protein (420 aa).

2 disordered regions span residues 84–103 (RSQA…GTSE) and 122–211 (SMNN…NKKS). The segment covering 85–103 (SQANSESTPPEHTWSGTSE) has biased composition (polar residues). Basic and acidic residues predominate over residues 184-199 (SMTDQEVEQRRKEANK). Coiled coils occupy residues 265-310 (TEKE…TATN) and 345-374 (LQFK…NFKE). Over residues 399–408 (KTSSPKTSIA) the composition is skewed to polar residues. A disordered region spans residues 399-420 (KTSSPKTSIAGSHRRSTRSSEN). A compositionally biased stretch (basic residues) spans 410–420 (SHRRSTRSSEN).

This is an uncharacterized protein from Caenorhabditis elegans.